We begin with the raw amino-acid sequence, 119 residues long: EF-hand calcium-binding domain-containing protein 2 (119 aa).

A signal peptide spans 1–22 (MKVAVVLIVVLVVMMIGQETDS). Positions 82-117 (VDDNGFVEFKATYDVDGDGVVQVEEYETVVELTENL) constitute an EF-hand domain. D95, D97, D99, and E106 together coordinate Ca(2+).

In terms of tissue distribution, component of the acid-soluble organic matrix of calcified layers of the shell (at protein level).

It localises to the secreted. This is EF-hand calcium-binding domain-containing protein 2 from Lottia gigantea (Giant owl limpet).